Consider the following 551-residue polypeptide: Arginine--tRNA ligase (551 aa).

Positions 125–135 (ANPTGPLHIGH) match the 'HIGH' region motif.

This sequence belongs to the class-I aminoacyl-tRNA synthetase family. As to quaternary structure, monomer.

It localises to the cytoplasm. The enzyme catalyses tRNA(Arg) + L-arginine + ATP = L-arginyl-tRNA(Arg) + AMP + diphosphate. The polypeptide is Arginine--tRNA ligase (Nitratidesulfovibrio vulgaris (strain DP4) (Desulfovibrio vulgaris)).